Reading from the N-terminus, the 60-residue chain is Cytotoxin KJC3 (60 aa).

Intrachain disulfides connect cysteine 3-cysteine 21, cysteine 14-cysteine 38, cysteine 42-cysteine 53, and cysteine 54-cysteine 59.

Belongs to the three-finger toxin family. Short-chain subfamily. Type IA cytotoxin sub-subfamily. As to quaternary structure, monomer in solution; Homodimer and oligomer in the presence of negatively charged lipids forming a pore with a size ranging between 20 and 30 Angstroms. Expressed by the venom gland.

It is found in the secreted. Its subcellular location is the target cell membrane. Its function is as follows. Shows cytolytic activity on many different cells by forming pore in lipid membranes. In vivo, increases heart rate or kills the animal by cardiac arrest. In addition, it binds to heparin with high affinity, interacts with Kv channel-interacting protein 1 (KCNIP1) in a calcium-independent manner, and binds to integrin alpha-V/beta-3 (ITGAV/ITGB3) with moderate affinity. This chain is Cytotoxin KJC3, found in Naja sputatrix (Malayan spitting cobra).